The following is a 278-amino-acid chain: Small ribosomal subunit biogenesis GTPase RsgA (278 aa).

The CP-type G domain maps to 62–218; it reads KNTLVRPKVV…ICDTPGFNVI (157 aa). GTP is bound by residues 112–115 and 162–170; these read TKND and GQSGVGKSS. Zn(2+) contacts are provided by cysteine 241, cysteine 246, histidine 248, and cysteine 254.

The protein belongs to the TRAFAC class YlqF/YawG GTPase family. RsgA subfamily. Monomer. Associates with 30S ribosomal subunit, binds 16S rRNA. The cofactor is Zn(2+).

The protein resides in the cytoplasm. In terms of biological role, one of several proteins that assist in the late maturation steps of the functional core of the 30S ribosomal subunit. Helps release RbfA from mature subunits. May play a role in the assembly of ribosomal proteins into the subunit. Circularly permuted GTPase that catalyzes slow GTP hydrolysis, GTPase activity is stimulated by the 30S ribosomal subunit. In Mycoplasma pneumoniae (strain ATCC 29342 / M129 / Subtype 1) (Mycoplasmoides pneumoniae), this protein is Small ribosomal subunit biogenesis GTPase RsgA.